The primary structure comprises 291 residues: RPE-retinal G protein-coupled receptor (291 aa).

Residues 1–15 (MAETSALPTGFGELE) are Extracellular-facing. Residues 16 to 36 (VLAVGMVLLVEALSGLSLNTL) form a helical membrane-spanning segment. The Cytoplasmic segment spans residues 37–52 (TIFSFCKTPELRTPCH). The helical transmembrane segment at 53-73 (LLVLSLALADSGISLNALVAA) threads the bilayer. Over 74 to 91 (TSSLLRRWPYGSDGCQAH) the chain is Extracellular. Residues C88 and C162 are joined by a disulfide bond. A helical membrane pass occupies residues 92-112 (GFQGFVTALASICSSAAIAWG). Residues 113–130 (RYHHYCTRSQLAWNSAVS) lie on the Cytoplasmic side of the membrane. The helical transmembrane segment at 131 to 151 (LVLFVWLSSAFWAALPLLGWG) threads the bilayer. At 152-175 (HYDYEPLGTCCTLDYSKGDRNFTS) the chain is on the extracellular side. Residue N172 is glycosylated (N-linked (GlcNAc...) asparagine). A helical membrane pass occupies residues 176 to 196 (FLFTMSFFNFAMPLFITITSY). At 197 to 219 (SLMEQKLGKSGHLQVNTTLPART) the chain is on the cytoplasmic side. The chain crosses the membrane as a helical span at residues 220-240 (LLLGWGPYAILYLYAVIADVT). Topologically, residues 241-247 (SISPKLQ) are extracellular. A helical membrane pass occupies residues 248-268 (MVPALIAKMVPTINAINYALG). At K255 the chain carries N6-(retinylidene)lysine. The Cytoplasmic segment spans residues 269–291 (NEMVCRGIWQCLSPQKREKDRTK).

It belongs to the G-protein coupled receptor 1 family. Opsin subfamily. In terms of processing, covalently binds all-trans- and 11-cis-retinal. In terms of tissue distribution, preferentially expressed at high levels in the retinal pigment epithelium (RPE) and Mueller cells of the neural retina.

The protein localises to the membrane. In terms of biological role, receptor for all-trans- and 11-cis-retinal. Binds preferentially to the former and may catalyze the isomerization of the chromophore by a retinochrome-like mechanism. This is RPE-retinal G protein-coupled receptor (RGR) from Homo sapiens (Human).